Consider the following 219-residue polypeptide: Adenylate kinase (219 aa).

Gly-10–Thr-15 provides a ligand contact to ATP. Positions Ser-30–Val-59 are NMP. Residues Thr-31, Arg-36, Gly-57 to Val-59, Gly-85 to Arg-88, and Gln-92 contribute to the AMP site. Positions Gly-122–Asp-159 are LID. ATP-binding positions include Arg-123 and Val-132 to Tyr-133. The disordered stretch occupies residues Gly-128–Gly-150. The span at Pro-140–Gly-150 shows a compositional bias: basic and acidic residues. AMP-binding residues include Arg-156 and Arg-167. Arg-203 contacts ATP.

This sequence belongs to the adenylate kinase family. As to quaternary structure, monomer.

The protein localises to the cytoplasm. The enzyme catalyses AMP + ATP = 2 ADP. Its pathway is purine metabolism; AMP biosynthesis via salvage pathway; AMP from ADP: step 1/1. Functionally, catalyzes the reversible transfer of the terminal phosphate group between ATP and AMP. Plays an important role in cellular energy homeostasis and in adenine nucleotide metabolism. This is Adenylate kinase from Halorhodospira halophila (strain DSM 244 / SL1) (Ectothiorhodospira halophila (strain DSM 244 / SL1)).